Here is a 142-residue protein sequence, read N- to C-terminus: Putative transcriptional regulatory protein PF0535 (142 aa).

Belongs to the Tfx family.

Its function is as follows. Putative transcriptional regulator. This Pyrococcus furiosus (strain ATCC 43587 / DSM 3638 / JCM 8422 / Vc1) protein is Putative transcriptional regulatory protein PF0535.